The sequence spans 57 residues: MLGWVVTFLVVALIAGLLGFGGIAGASIEIAKVIFFIAIVLFLVSAVVGLVRGRTRV.

2 consecutive transmembrane segments (helical) span residues 4–24 (WVVT…GGIA) and 30–50 (IAKV…VVGL).

It belongs to the UPF0391 family.

It localises to the cell membrane. The protein is UPF0391 membrane protein RPB_2024 of Rhodopseudomonas palustris (strain HaA2).